The sequence spans 235 residues: Leucyl/phenylalanyl-tRNA--protein transferase (235 aa).

The protein belongs to the L/F-transferase family.

Its subcellular location is the cytoplasm. The enzyme catalyses N-terminal L-lysyl-[protein] + L-leucyl-tRNA(Leu) = N-terminal L-leucyl-L-lysyl-[protein] + tRNA(Leu) + H(+). It carries out the reaction N-terminal L-arginyl-[protein] + L-leucyl-tRNA(Leu) = N-terminal L-leucyl-L-arginyl-[protein] + tRNA(Leu) + H(+). It catalyses the reaction L-phenylalanyl-tRNA(Phe) + an N-terminal L-alpha-aminoacyl-[protein] = an N-terminal L-phenylalanyl-L-alpha-aminoacyl-[protein] + tRNA(Phe). In terms of biological role, functions in the N-end rule pathway of protein degradation where it conjugates Leu, Phe and, less efficiently, Met from aminoacyl-tRNAs to the N-termini of proteins containing an N-terminal arginine or lysine. In Methylococcus capsulatus (strain ATCC 33009 / NCIMB 11132 / Bath), this protein is Leucyl/phenylalanyl-tRNA--protein transferase.